A 386-amino-acid chain; its full sequence is Alanine racemase (386 aa).

Residue Lys-48 is the Proton acceptor; specific for D-alanine of the active site. Residue Lys-48 is modified to N6-(pyridoxal phosphate)lysine. Arg-147 serves as a coordination point for substrate. Tyr-279 (proton acceptor; specific for L-alanine) is an active-site residue. Met-327 serves as a coordination point for substrate.

Belongs to the alanine racemase family. Pyridoxal 5'-phosphate is required as a cofactor.

The catalysed reaction is L-alanine = D-alanine. It participates in amino-acid biosynthesis; D-alanine biosynthesis; D-alanine from L-alanine: step 1/1. Its function is as follows. Catalyzes the interconversion of L-alanine and D-alanine. May also act on other amino acids. The protein is Alanine racemase (alr) of Prochlorococcus marinus (strain SARG / CCMP1375 / SS120).